A 434-amino-acid polypeptide reads, in one-letter code: Enolase (434 aa).

Residues histidine 158 and glutamate 167 each coordinate substrate. The active-site Proton donor is glutamate 210. Mg(2+) contacts are provided by aspartate 245, glutamate 294, and aspartate 319. 2 residues coordinate substrate: glutamate 294 and aspartate 319. The active-site Proton acceptor is lysine 344. Substrate-binding positions include 371-374 and lysine 395; that span reads SHRS.

Belongs to the enolase family. As to quaternary structure, homodimer. The cofactor is Mg(2+).

The protein resides in the cytoplasm. It carries out the reaction (2R)-2-phosphoglycerate = phosphoenolpyruvate + H2O. The protein operates within carbohydrate degradation; glycolysis; pyruvate from D-glyceraldehyde 3-phosphate: step 4/5. The protein is Enolase of Caenorhabditis elegans.